The primary structure comprises 1170 residues: Anion exchange protein 3 (1170 aa).

The Cytoplasmic segment spans residues 1–656 (MGRSYNEKDF…DLKDALDTQC (656 aa)). 3 disordered regions span residues 17-96 (FHHT…PQLS), 112-167 (FHME…TTRG), and 239-267 (HLVK…RRKR). Residues 32 to 53 (RFRKRVLSMDRRRKRKRKKKKT) are compositionally biased toward basic residues. The span at 67-76 (VDEEEAESEI) shows a compositional bias: acidic residues. Residues 246–259 (RCQLPRSSNGSPPL) are compositionally biased toward polar residues. 5 consecutive transmembrane segments (helical) span residues 657 to 677 (IAAV…FGGL), 702 to 722 (FSLL…LLVF), 744 to 764 (IGFW…SFLV), 774 to 794 (IFAF…LIKV), and 828 to 848 (PNTA…AFFL). The tract at residues 657–1170 (IAAVIFIYFA…DEYNEIHMLV (514 aa)) is membrane (anion exchange). The Cytoplasmic portion of the chain corresponds to 849-863 (RKLRNSRFLGGKVRR). Helical transmembrane passes span 864 to 884 (VIGD…DILI), 919 to 939 (FPVW…ILIF), 966 to 986 (LLLI…WLTA), 1020 to 1063 (RVTG…LTGI), and 1104 to 1124 (IVLL…FILI).

Belongs to the anion exchanger (TC 2.A.31) family. As to expression, widely expressed at low levels.

The protein localises to the cell membrane. It catalyses the reaction hydrogencarbonate(in) + chloride(out) = hydrogencarbonate(out) + chloride(in). In terms of biological role, sodium-independent anion exchanger which mediates the electroneutral exchange of chloride for bicarbonate ions across the cell membrane. May be involved in the regulation of intracellular pH, and the modulation of cardiac action potential. This is Anion exchange protein 3 from Danio rerio (Zebrafish).